The sequence spans 38 residues: Alpha-conotoxin PeIA (38 aa).

A propeptide spanning residues 1–21 is cleaved from the precursor; that stretch reads FDGRNAAANDKASDLVALTVR. 2 cysteine pairs are disulfide-bonded: cysteine 23-cysteine 29 and cysteine 24-cysteine 37. The interval 25–27 is ser-Xaa-Pro motif, crucial for potent interaction with nAChR; sequence SHP. Cysteine 37 carries the cysteine amide modification.

The protein belongs to the conotoxin A superfamily. In terms of processing, the hydroxylation at position Pro-27 is critical, since an hydroxylation at this position decreases potency of the toxin to inhibit both alpha-3-beta-2 (1300-fold) and alpha-6/alpha-3-beta-2-beta-3 (130-fold) nAChRs. Post-translationally, a non-modified residue at position Pro-34 is critical, since a hydroxylation at this position decreases potency of the toxin to inhibit alpha-3-beta-2 (1-45-fold) and increases potency to inhibit alpha-6/alpha-3-beta-2-beta-3 (1.77-fold) nAChRs. Expressed by the venom duct.

The protein resides in the secreted. Its function is as follows. Alpha-conotoxins act on postsynaptic membranes, they bind to the nicotinic acetylcholine receptors (nAChR) and thus inhibit them. This synthetic peptide potently and reversibly blocks alpha-9-alpha-10/CHRNA9-CHRNA10 nAChR (IC(50)=6.9-54.9 nM), alpha-3-beta-2/CHRNA3-CHRNB2 (IC(50)=9.7-97.5 nM) and alpha-6/alpha-3-beta-2-beta-3 (CHRNA6/CHRNA3-CHRNB2-CHRNB3) (IC(50)=11.1-17.2 nM). It also inhibits alpha-6/alpha-3-beta-4 (CHRNA6/CHRNA3-CHRNB4) nAChR with a higher potency on human (IC(50)=6.75 nM) than on rat receptors (IC(50)=130-147 nM). Also shows a weak ability to inhibit alpha-3-beta-4/CHRNA3-CHRNB4 (IC(50)=480-1500 nM). This synthetic toxin also inhibits N-type calcium channels (Ca2.2/CACNA1B) (IC(50)=1.1 nM) via the activation of the G protein-coupled GABA(B) receptor in DRG neurons. Also exhibits inhibition of D.melanogaster alpha-7/CHRNA7 nAChRs. The sequence is that of Alpha-conotoxin PeIA from Conus pergrandis (Grand cone).